We begin with the raw amino-acid sequence, 495 residues long: MKSQLLSLAVAVTTISQGVVGQEPFGWPFKPMVTQDDLQNKIKLKDIMAGVEKLQSFSDAHPEKNRVFGGNGHKDTVEWIYNEIKATGYYDVKKQEQVHLWSHAEAALNANGKDLKASAMSYSPPASKIMAELVVAKNNGCNATDYPANTQGKIVLVERGVCSFGEKSAQAGDAKAAGAIVYNNVPGSLAGTLGGLDKRHVPTAGLSQEDGKNLATLVASGKIDVTMNVISLFENRTTWNVIAETKGGDHNNVIMLGAHSDSVDAGPGINDNGSGSIGIMTVAKALTNFKLNNAVRFAWWTAEEFGLLGSTFYVNSLDDRELHKVKLYLNFDMIGSPNFANQIYDGDGSAYNMTGPAGSAEIEYLFEKFFDDQGIPHQPTAFTGRSDYSAFIKRNVPAGGLFTGAEVVKTPEQVKLFGGEAGVAYDKNYHRKGDTVANINKGAIFLNTRAIAYAIAEYARSLKGFPTRPKTGKRDVNPQYSKMPGGGCGHHTVFM.

The signal sequence occupies residues 1-21; it reads MKSQLLSLAVAVTTISQGVVG. The PA domain occupies 124–218; sequence PPASKIMAEL…EDGKNLATLV (95 aa). N142 and N235 each carry an N-linked (GlcNAc...) asparagine glycan. Zn(2+) contacts are provided by H259 and D271. A glycan (N-linked (GlcNAc...) asparagine) is linked at N272. The active-site Proton acceptor is E303. The Zn(2+) site is built by E304 and D332. N352 carries an N-linked (GlcNAc...) asparagine glycan. H430 is a Zn(2+) binding site.

The protein belongs to the peptidase M28 family. M28A subfamily. Monomer. It depends on Zn(2+) as a cofactor.

It is found in the secreted. Activity is inhibited by EDTA, o-phenanthroline, bestatin and amastatin. Extracellular aminopeptidase that releases a wide variety of amino acids from natural peptides and contributes to pathogenicity. This Trichophyton rubrum (Athlete's foot fungus) protein is Leucine aminopeptidase 2 (LAP2).